The primary structure comprises 554 residues: CTP synthase (554 aa).

The tract at residues 1-265 is amidoligase domain; sequence MTPLIFVTGG…DELVIDQFKL (265 aa). Position 13 (Ser-13) interacts with CTP. Ser-13 contacts UTP. ATP-binding positions include 14-19 and Asp-71; that span reads SLGKGI. Positions 71 and 139 each coordinate Mg(2+). CTP is bound by residues 146–148, 186–191, and Lys-222; these read DIE and KTKPTQ. UTP-binding positions include 186 to 191 and Lys-222; that span reads KTKPTQ. In terms of domain architecture, Glutamine amidotransferase type-1 spans 292-545; the sequence is NIAVVGKYVD…VRAAREKKAG (254 aa). An L-glutamine-binding site is contributed by Gly-353. The Nucleophile; for glutamine hydrolysis role is filled by Cys-380. L-glutamine contacts are provided by residues 381-384, Glu-404, and Arg-471; that span reads YGMQ. Catalysis depends on residues His-518 and Glu-520.

Belongs to the CTP synthase family. Homotetramer.

The enzyme catalyses UTP + L-glutamine + ATP + H2O = CTP + L-glutamate + ADP + phosphate + 2 H(+). It catalyses the reaction L-glutamine + H2O = L-glutamate + NH4(+). The catalysed reaction is UTP + NH4(+) + ATP = CTP + ADP + phosphate + 2 H(+). Its pathway is pyrimidine metabolism; CTP biosynthesis via de novo pathway; CTP from UDP: step 2/2. Its activity is regulated as follows. Allosterically activated by GTP, when glutamine is the substrate; GTP has no effect on the reaction when ammonia is the substrate. The allosteric effector GTP functions by stabilizing the protein conformation that binds the tetrahedral intermediate(s) formed during glutamine hydrolysis. Inhibited by the product CTP, via allosteric rather than competitive inhibition. Its function is as follows. Catalyzes the ATP-dependent amination of UTP to CTP with either L-glutamine or ammonia as the source of nitrogen. Regulates intracellular CTP levels through interactions with the four ribonucleotide triphosphates. This chain is CTP synthase, found in Xanthomonas axonopodis pv. citri (strain 306).